We begin with the raw amino-acid sequence, 239 residues long: uncharacterized protein (239 aa).

Transmembrane regions (helical) follow at residues 125–144 (LAII…LILY), 149–171 (IFVL…FLFL), and 197–216 (SVLN…GILF).

It is found in the cell membrane. This is an uncharacterized protein from Aquifex aeolicus (strain VF5).